A 202-amino-acid chain; its full sequence is Josephin-1 (202 aa).

Serine 15 is modified (phosphoserine). Residues 23 to 202 (PPQIYHEKQR…EAHQSWRADV (180 aa)) enclose the Josephin domain. Cysteine 36 functions as the Nucleophile in the catalytic mechanism. Residue histidine 139 is the Proton acceptor of the active site.

Interacts with beta-actin/ACTB. Post-translationally, monoubiquitinated. Ubiquitination activates deubiquitination activity in vitro.

Its subcellular location is the cell membrane. The protein localises to the cytoplasm. It carries out the reaction Thiol-dependent hydrolysis of ester, thioester, amide, peptide and isopeptide bonds formed by the C-terminal Gly of ubiquitin (a 76-residue protein attached to proteins as an intracellular targeting signal).. In terms of biological role, deubiquitinates monoubiquitinated probes (in vitro). When ubiquitinated, cleaves 'Lys-63'-linked and 'Lys-48'-linked poly-ubiquitin chains (in vitro), hence may act as a deubiquitinating enzyme. May increase macropinocytosis and suppress clathrin- and caveolae-mediated endocytosis. May enhance membrane dynamics and cell motility independently of its catalytic activity. The chain is Josephin-1 (JOSD1) from Bos taurus (Bovine).